The primary structure comprises 180 residues: NADH-quinone oxidoreductase subunit B (180 aa).

4 residues coordinate [4Fe-4S] cluster: cysteine 59, cysteine 60, cysteine 124, and cysteine 154.

Belongs to the complex I 20 kDa subunit family. As to quaternary structure, NDH-1 is composed of 14 different subunits. Subunits NuoB, C, D, E, F, and G constitute the peripheral sector of the complex. [4Fe-4S] cluster is required as a cofactor.

It localises to the cell inner membrane. It catalyses the reaction a quinone + NADH + 5 H(+)(in) = a quinol + NAD(+) + 4 H(+)(out). Its function is as follows. NDH-1 shuttles electrons from NADH, via FMN and iron-sulfur (Fe-S) centers, to quinones in the respiratory chain. The immediate electron acceptor for the enzyme in this species is believed to be ubiquinone. Couples the redox reaction to proton translocation (for every two electrons transferred, four hydrogen ions are translocated across the cytoplasmic membrane), and thus conserves the redox energy in a proton gradient. The polypeptide is NADH-quinone oxidoreductase subunit B (Beijerinckia indica subsp. indica (strain ATCC 9039 / DSM 1715 / NCIMB 8712)).